Consider the following 584-residue polypeptide: Putative poly(A) polymerase catalytic subunit (584 aa).

Over residues 522 to 531 (EAEISEKEET) the composition is skewed to basic and acidic residues. A disordered region spans residues 522 to 584 (EAEISEKEET…ENSLDSLTSD (63 aa)). Residues 546–569 (SPNSSPNSSPNNSLNNSIDISTNN) are compositionally biased toward low complexity.

The protein belongs to the poxviridae poly(A) polymerase catalytic subunit family. Highly divergent.

The protein resides in the virion. It catalyses the reaction RNA(n) + ATP = RNA(n)-3'-adenine ribonucleotide + diphosphate. Its function is as follows. Polymerase that creates the 3'-poly(A) tail of mRNA's. This Acanthamoeba polyphaga (Amoeba) protein is Putative poly(A) polymerase catalytic subunit.